The sequence spans 117 residues: Large ribosomal subunit protein bL20 (117 aa).

Belongs to the bacterial ribosomal protein bL20 family.

In terms of biological role, binds directly to 23S ribosomal RNA and is necessary for the in vitro assembly process of the 50S ribosomal subunit. It is not involved in the protein synthesizing functions of that subunit. This Neorickettsia sennetsu (strain ATCC VR-367 / Miyayama) (Ehrlichia sennetsu) protein is Large ribosomal subunit protein bL20.